The following is a 220-amino-acid chain: Small ribosomal subunit protein uS3c (220 aa).

Residues 39–120 form the KH type-2 domain; that stretch reads IRDFIKNYVK…KLIIDIIRIT (82 aa).

This sequence belongs to the universal ribosomal protein uS3 family. In terms of assembly, part of the 30S ribosomal subunit.

The protein resides in the plastid. The sequence is that of Small ribosomal subunit protein uS3c (rps3) from Epifagus virginiana (Beechdrops).